We begin with the raw amino-acid sequence, 1738 residues long: Complement C4-B (1738 aa).

The signal sequence occupies residues M1–Q19. A disulfide bond links C66 and C95. N-linked (GlcNAc...) asparagine glycosylation is present at N224. A disulfide bridge connects residues C633 and C667. A propeptide spanning residues R674–R677 is cleaved from the precursor. Cystine bridges form between C700-C726, C701-C733, and C714-C734. The region spanning C700–C734 is the Anaphylatoxin-like domain. N743 carries an N-linked (GlcNAc...) asparagine glycan. Residues C1006–Q1009 constitute a cross-link (isoglutamyl cysteine thioester (Cys-Gln)). Residues N1324 and N1387 are each glycosylated (N-linked (GlcNAc...) asparagine). Sulfotyrosine is present on residues Y1413, Y1416, and Y1417. A propeptide spanning residues R1444 to R1447 is cleaved from the precursor. 5 disulfide bridges follow: C1465–C1529, C1577–C1582, C1589–C1667, C1612–C1736, and C1712–C1721. The region spanning C1589–C1736 is the NTR domain.

As to quaternary structure, in absence of complement activation, circulates in blood as a disulfide-linked trimer of an alpha, beta and gamma chain. Complement C4b is composed of complement C4b-A, complement C4 beta and complement C4 gamma chains that are associated via disulfide bonds. Non-enzymatic component of the C3 convertase, also named C4bC2b, composed of the serine protease complement C2b (C2), as well as complement C4b. Non-enzymatic component of the C5 convertase, also named C4bC2bC3b, composed of the serine protease complement C2b (C2), complement C3b, as well as complement C4b. Post-translationally, prior to secretion, the single-chain precursor is enzymatically cleaved by plasminogen (PLG) to yield non-identical chains alpha, beta and gamma. During activation of the complement systems, the alpha chain is cleaved into C4a and C4b by different proteases depending on the complement pathway: C4b stays linked to the beta and gamma chains, while C4a is released in the plasma. The alpha chain is cleaved by C1S to generate C4a and C4b following activation by the classical complement system. The alpha chain is cleaved to generate C4a and C4b by MASP2 following activation by the lectin complement system. The alpha chain is cleaved by GZMK to generate C4a and C4b following activation by the GZMK complement system. Further degradation of C4b by C1 into the inactive fragments C4c and C4d blocks the generation of C3 convertase. The proteolytic cleavages often are incomplete so that many structural forms can be found in plasma. Upon activation, the internal thioester bond reacts with carbohydrate antigens on the target surface to form amide or ester bonds, leading to covalent association with the surface of pathogens. In terms of processing, complement C4b interacts with complement C3b via a thioester linkage.

Its subcellular location is the secreted. The protein localises to the cell surface. Precursor of non-enzymatic components of the classical, lectin and GZMK complement pathways, which consist in a cascade of proteins that leads to phagocytosis and breakdown of pathogens and signaling that strengthens the adaptive immune system. Its function is as follows. Non-enzymatic component of C3 and C5 convertases. Generated following cleavage by complement proteases (C1S, MASP2 or GZMK, depending on the complement pathway), it covalently attaches to the surface of pathogens, where it acts as an opsonin that marks the surface of antigens for removal. It then recruits the serine protease complement C2b to form the C3 and C5 convertases, which cleave and activate C3 and C5, respectively, the next components of the complement pathways. Complement C4b-A isotype is responsible for effective binding to form amide bonds with immune aggregates or protein antigens, while complement C4b-B isotype catalyzes the transacylation of the thioester carbonyl group to form ester bonds with carbohydrate antigens. Functionally, putative humoral mediator released following cleavage by complement proteases (C1S, MASP2 or GZMK, depending on the complement pathway). While it is strongly similar to anaphylatoxins, its role is unclear. Was reported to act as a mediator of local inflammatory process; however these effects were probably due to contamination with C3a and/C5a anaphylatoxins in biological assays. The chain is Complement C4-B from Mus musculus (Mouse).